The chain runs to 122 residues: Prefoldin subunit 1 (122 aa).

An N-acetylalanine modification is found at A2.

This sequence belongs to the prefoldin subunit beta family. Heterohexamer of two PFD-alpha type and four PFD-beta type subunits.

In terms of biological role, binds specifically to cytosolic chaperonin (c-CPN) and transfers target proteins to it. Binds to nascent polypeptide chain and promotes folding in an environment in which there are many competing pathways for nonnative proteins. The protein is Prefoldin subunit 1 (PFDN1) of Bos taurus (Bovine).